Consider the following 467-residue polypeptide: ATP synthase subunit beta (467 aa).

156 to 163 provides a ligand contact to ATP; that stretch reads GGAGVGKT.

It belongs to the ATPase alpha/beta chains family. As to quaternary structure, F-type ATPases have 2 components, CF(1) - the catalytic core - and CF(0) - the membrane proton channel. CF(1) has five subunits: alpha(3), beta(3), gamma(1), delta(1), epsilon(1). CF(0) has three main subunits: a(1), b(2) and c(9-12). The alpha and beta chains form an alternating ring which encloses part of the gamma chain. CF(1) is attached to CF(0) by a central stalk formed by the gamma and epsilon chains, while a peripheral stalk is formed by the delta and b chains.

The protein resides in the cell inner membrane. It carries out the reaction ATP + H2O + 4 H(+)(in) = ADP + phosphate + 5 H(+)(out). Produces ATP from ADP in the presence of a proton gradient across the membrane. The catalytic sites are hosted primarily by the beta subunits. The chain is ATP synthase subunit beta from Cupriavidus pinatubonensis (strain JMP 134 / LMG 1197) (Cupriavidus necator (strain JMP 134)).